The chain runs to 467 residues: Uronate isomerase (467 aa).

This sequence belongs to the metallo-dependent hydrolases superfamily. Uronate isomerase family.

The enzyme catalyses D-glucuronate = D-fructuronate. It carries out the reaction aldehydo-D-galacturonate = keto-D-tagaturonate. It participates in carbohydrate metabolism; pentose and glucuronate interconversion. This chain is Uronate isomerase, found in Haemophilus influenzae (strain PittGG).